The chain runs to 209 residues: Thiamine-phosphate synthase (209 aa).

4-amino-2-methyl-5-(diphosphooxymethyl)pyrimidine is bound by residues 38-42 and N70; that span reads QYRAK. Mg(2+)-binding residues include D71 and D90. Position 109 (S109) interacts with 4-amino-2-methyl-5-(diphosphooxymethyl)pyrimidine. Residue 135 to 137 coordinates 2-[(2R,5Z)-2-carboxy-4-methylthiazol-5(2H)-ylidene]ethyl phosphate; sequence TST. K138 serves as a coordination point for 4-amino-2-methyl-5-(diphosphooxymethyl)pyrimidine. 2-[(2R,5Z)-2-carboxy-4-methylthiazol-5(2H)-ylidene]ethyl phosphate-binding positions include G165 and 185-186; that span reads VS.

It belongs to the thiamine-phosphate synthase family. The cofactor is Mg(2+).

It carries out the reaction 2-[(2R,5Z)-2-carboxy-4-methylthiazol-5(2H)-ylidene]ethyl phosphate + 4-amino-2-methyl-5-(diphosphooxymethyl)pyrimidine + 2 H(+) = thiamine phosphate + CO2 + diphosphate. It catalyses the reaction 2-(2-carboxy-4-methylthiazol-5-yl)ethyl phosphate + 4-amino-2-methyl-5-(diphosphooxymethyl)pyrimidine + 2 H(+) = thiamine phosphate + CO2 + diphosphate. The catalysed reaction is 4-methyl-5-(2-phosphooxyethyl)-thiazole + 4-amino-2-methyl-5-(diphosphooxymethyl)pyrimidine + H(+) = thiamine phosphate + diphosphate. It functions in the pathway cofactor biosynthesis; thiamine diphosphate biosynthesis; thiamine phosphate from 4-amino-2-methyl-5-diphosphomethylpyrimidine and 4-methyl-5-(2-phosphoethyl)-thiazole: step 1/1. Functionally, condenses 4-methyl-5-(beta-hydroxyethyl)thiazole monophosphate (THZ-P) and 2-methyl-4-amino-5-hydroxymethyl pyrimidine pyrophosphate (HMP-PP) to form thiamine monophosphate (TMP). In Persephonella marina (strain DSM 14350 / EX-H1), this protein is Thiamine-phosphate synthase.